Reading from the N-terminus, the 492-residue chain is Cysteine--tRNA ligase (492 aa).

Residue Cys27 coordinates Zn(2+). The 'HIGH' region signature appears at 29–39 (VTVYDLCHLGH). Zn(2+) contacts are provided by Cys211, His236, and Glu240. The short motif at 268 to 272 (KMSKS) is the 'KMSKS' region element. Position 271 (Lys271) interacts with ATP.

It belongs to the class-I aminoacyl-tRNA synthetase family. Monomer. Zn(2+) is required as a cofactor.

The protein localises to the cytoplasm. It carries out the reaction tRNA(Cys) + L-cysteine + ATP = L-cysteinyl-tRNA(Cys) + AMP + diphosphate. This Prochlorococcus marinus subsp. pastoris (strain CCMP1986 / NIES-2087 / MED4) protein is Cysteine--tRNA ligase.